The sequence spans 346 residues: NADH-ubiquinone oxidoreductase chain 2 (346 aa).

Helical transmembrane passes span 25-45 (NLLL…PLLA), 56-76 (ATKY…VIIL), 94-114 (LLNM…FHYW), 122-142 (IPLH…LSIL), 148-168 (LLNP…GAWG), 178-198 (IMAY…PYNP), 200-220 (LTLL…ITLM), 240-260 (ILTM…LTGF), 278-298 (LSTL…RLIY), and 325-345 (FILP…SQLI).

Belongs to the complex I subunit 2 family. In terms of assembly, core subunit of respiratory chain NADH dehydrogenase (Complex I) which is composed of 45 different subunits. Interacts with TMEM242.

It is found in the mitochondrion inner membrane. The enzyme catalyses a ubiquinone + NADH + 5 H(+)(in) = a ubiquinol + NAD(+) + 4 H(+)(out). Core subunit of the mitochondrial membrane respiratory chain NADH dehydrogenase (Complex I) which catalyzes electron transfer from NADH through the respiratory chain, using ubiquinone as an electron acceptor. Essential for the catalytic activity and assembly of complex I. This chain is NADH-ubiquinone oxidoreductase chain 2, found in Rattus norvegicus (Rat).